The following is a 698-amino-acid chain: Polyribonucleotide nucleotidyltransferase (698 aa).

Mg(2+)-binding residues include aspartate 490 and aspartate 496. Residues 557-616 (PKVVTMTIKPDKIRDVIGPGGKKINEIIDETGVKLDIEQDGTIFIGAVDQAMINRAREII) form the KH domain. The 69-residue stretch at 626-694 (GQTYQATVKR…KQGRVNASHR (69 aa)) folds into the S1 motif domain.

This sequence belongs to the polyribonucleotide nucleotidyltransferase family. Requires Mg(2+) as cofactor.

It is found in the cytoplasm. It catalyses the reaction RNA(n+1) + phosphate = RNA(n) + a ribonucleoside 5'-diphosphate. Its function is as follows. Involved in mRNA degradation. Catalyzes the phosphorolysis of single-stranded polyribonucleotides processively in the 3'- to 5'-direction. The sequence is that of Polyribonucleotide nucleotidyltransferase from Staphylococcus aureus (strain MSSA476).